Consider the following 308-residue polypeptide: Transaldolase (308 aa).

The active-site Schiff-base intermediate with substrate is K125.

Belongs to the transaldolase family. Type 1 subfamily. In terms of assembly, homodimer.

It is found in the cytoplasm. It carries out the reaction D-sedoheptulose 7-phosphate + D-glyceraldehyde 3-phosphate = D-erythrose 4-phosphate + beta-D-fructose 6-phosphate. The protein operates within carbohydrate degradation; pentose phosphate pathway; D-glyceraldehyde 3-phosphate and beta-D-fructose 6-phosphate from D-ribose 5-phosphate and D-xylulose 5-phosphate (non-oxidative stage): step 2/3. Its function is as follows. Transaldolase is important for the balance of metabolites in the pentose-phosphate pathway. The protein is Transaldolase of Pseudomonas fluorescens (strain Pf0-1).